Reading from the N-terminus, the 407-residue chain is Phosphopentomutase (407 aa).

Residues Asp10, Asp306, His311, Asp347, His348, and His359 each coordinate Mn(2+).

The protein belongs to the phosphopentomutase family. It depends on Mn(2+) as a cofactor.

Its subcellular location is the cytoplasm. It catalyses the reaction 2-deoxy-alpha-D-ribose 1-phosphate = 2-deoxy-D-ribose 5-phosphate. The enzyme catalyses alpha-D-ribose 1-phosphate = D-ribose 5-phosphate. Its pathway is carbohydrate degradation; 2-deoxy-D-ribose 1-phosphate degradation; D-glyceraldehyde 3-phosphate and acetaldehyde from 2-deoxy-alpha-D-ribose 1-phosphate: step 1/2. In terms of biological role, isomerase that catalyzes the conversion of deoxy-ribose 1-phosphate (dRib-1-P) and ribose 1-phosphate (Rib-1-P) to deoxy-ribose 5-phosphate (dRib-5-P) and ribose 5-phosphate (Rib-5-P), respectively. This Salmonella arizonae (strain ATCC BAA-731 / CDC346-86 / RSK2980) protein is Phosphopentomutase.